Here is a 296-residue protein sequence, read N- to C-terminus: Sulfotransferase 1E1 (296 aa).

Lys-49 to Trp-54 lines the 3'-phosphoadenylyl sulfate pocket. A substrate-binding site is contributed by Lys-107 to His-109. His-109 functions as the Proton acceptor in the catalytic mechanism. 3'-phosphoadenylyl sulfate is bound by residues Arg-131, Ser-139, Tyr-194, Thr-228–Met-233, and Arg-258–Gly-260.

The protein belongs to the sulfotransferase 1 family. As to quaternary structure, homodimer. The N-terminus is blocked. As to expression, adrenal gland and much less in liver. Detectable only during pregnancy in uterine.

It localises to the cytoplasm. It is found in the cytosol. The catalysed reaction is estrone + 3'-phosphoadenylyl sulfate = estrone 3-sulfate + adenosine 3',5'-bisphosphate + H(+). The enzyme catalyses (24S)-hydroxycholesterol + 3'-phosphoadenylyl sulfate = (24S)-hydroxycholesterol 3-sulfate + adenosine 3',5'-bisphosphate + H(+). It carries out the reaction 17beta-estradiol + 3'-phosphoadenylyl sulfate = 17beta-estradiol 3-sulfate + adenosine 3',5'-bisphosphate + H(+). It catalyses the reaction 3beta-hydroxyandrost-5-en-17-one + 3'-phosphoadenylyl sulfate = dehydroepiandrosterone 3-sulfate + adenosine 3',5'-bisphosphate + H(+). The catalysed reaction is 4-ethylphenol + 3'-phosphoadenylyl sulfate = 4-ethylphenyl sulfate + adenosine 3',5'-bisphosphate + H(+). With respect to regulation, inhibited by estradiol. Functionally, sulfotransferase that utilizes 3'-phospho-5'-adenylyl sulfate (PAPS) as sulfonate donor to catalyze the sulfate conjugation of estradiol and estrone. Is a key enzyme in estrogen homeostasis, the sulfation of estrogens leads to their inactivation. Also sulfates dehydroepiandrosterone (DHEA), pregnenolone, (24S)-hydroxycholesteroland xenobiotic compounds like ethinylestradiol, equalenin, diethyl stilbesterol and 1-naphthol at significantly lower efficiency. Does not sulfonate cortisol, testosterone and dopamine. May play a role in gut microbiota-host metabolic interaction. O-sulfonates 4-ethylphenol (4-EP), a dietary tyrosine-derived metabolite produced by gut bacteria. The product 4-EPS crosses the blood-brain barrier and may negatively regulate oligodendrocyte maturation and myelination, affecting the functional connectivity of different brain regions associated with the limbic system. This is Sulfotransferase 1E1 (SULT1E1) from Cavia porcellus (Guinea pig).